We begin with the raw amino-acid sequence, 439 residues long: Vitellogenin-1 (439 aa).

The signal sequence occupies residues 1–20; that stretch reads MNPMRVLSLLACLAVAALAK. Over residues 158 to 175 the composition is skewed to polar residues; it reads QQQRQHGKNGNQDYQDQS. 2 disordered regions span residues 158–196 and 407–439; these read QQQR…EVKN and KSPF…KDYQ. Y171 carries the phosphotyrosine modification. 3 positions are modified to phosphoserine: S175, S185, and S186. Position 190 is a phosphotyrosine (Y190). Position 191 is a phosphoserine (S191). Positions 416–433 are enriched in polar residues; it reads AQKQSSYHGVHQAWNTNQ. The residue at position 435 (S435) is a Phosphoserine.

Belongs to the AB hydrolase superfamily. Lipase family. Post-translationally, tyrosine sulfation occurs in the female only and plays an essential functional role. Expressed in females only.

It is found in the secreted. The protein resides in the vesicle. Functionally, vitellogenin is the major yolk protein of eggs where it is used as a food source during embryogenesis. Along with Yp2 and Yp3, and their receptor yl/yolkless, required for maintenance of microtubule plus-end orientation towards the posterior pole of oocytes. Involved in polarized localization of germ plasm components, such as osk mRNA and vas protein, to the oocyte posterior cortex. Receptor-mediated endocytosis by yl/yolkless is crucial for actin reorganization, mediated by osk isoform A/Long, required to anchor germ plasm components to the oocyte cortex. The sequence is that of Vitellogenin-1 (Yp1) from Drosophila melanogaster (Fruit fly).